The primary structure comprises 276 residues: Octanoyltransferase LipM (276 aa).

The region spanning 33 to 247 is the BPL/LPL catalytic domain; that stretch reads GELKPTLRFY…GFKDAFSLTF (215 aa). The active-site Acyl-thioester intermediate is C150.

It belongs to the octanoyltransferase LipM family. Monomer.

It carries out the reaction octanoyl-[ACP] + L-lysyl-[protein] = N(6)-octanoyl-L-lysyl-[protein] + holo-[ACP] + H(+). It functions in the pathway protein modification; protein lipoylation via endogenous pathway; protein N(6)-(lipoyl)lysine from octanoyl-[acyl-carrier-protein]. In terms of biological role, catalyzes the transfer of endogenously produced octanoic acid from octanoyl-acyl-carrier-protein onto the lipoyl domain of GcvH, an intermediate carrier during protein lipoylation. In Exiguobacterium sp. (strain ATCC BAA-1283 / AT1b), this protein is Octanoyltransferase LipM.